The following is a 432-amino-acid chain: MTNVVVVGSQWGDEGKGKIVDWLSERADVVVRFQGGHNAGHTLVIDGISYKLSLLPSGVVRPGKMAVIGNGVVVDPHALIAEIAKLAAQGVTVTPDNLRIADNATLILSLHRELDGMREDAATNSGTKIGTTRRGIGPAYEDKVGRRAIRVMDLADPEGLAEKVARILPHHNALRRGFGAPEVEHSTIMEELLSVADKVLPFRETVWLMLDKERRRGARILFEGAQGSLLDIDHGTYPFVTSSNTVAGQAAAGSGMGPGSLGYILGITKAYTTRVGEGPFPTELTDEVGQFLGEKGHEFGTVTGRKRRCGWFDAALVRQSVATNGITGIALTKLDVLDGLDELKICVGYKLDGVEIDHLPAAQAAQARVEPIYVTLEGWKESTVGARKWADLPAQAIKYVRQVEELIGAPVALLSTSPERDDTILVTDPFED.

GTP-binding positions include 12 to 18 (GDEGKGK) and 40 to 42 (GHT). The Proton acceptor role is filled by Asp13. Mg(2+)-binding residues include Asp13 and Gly40. IMP contacts are provided by residues 13-16 (DEGK), 38-41 (NAGH), Thr132, Arg146, Gln226, Thr241, and Arg305. His41 acts as the Proton donor in catalysis. 301–307 (TVTGRKR) provides a ligand contact to substrate. Residues Arg307, 333–335 (KLD), and 415–417 (STS) contribute to the GTP site.

Belongs to the adenylosuccinate synthetase family. Homodimer. It depends on Mg(2+) as a cofactor.

Its subcellular location is the cytoplasm. The enzyme catalyses IMP + L-aspartate + GTP = N(6)-(1,2-dicarboxyethyl)-AMP + GDP + phosphate + 2 H(+). It participates in purine metabolism; AMP biosynthesis via de novo pathway; AMP from IMP: step 1/2. Plays an important role in the de novo pathway of purine nucleotide biosynthesis. Catalyzes the first committed step in the biosynthesis of AMP from IMP. The chain is Adenylosuccinate synthetase from Allorhizobium ampelinum (strain ATCC BAA-846 / DSM 112012 / S4) (Agrobacterium vitis (strain S4)).